The sequence spans 416 residues: Kynureninase (416 aa).

Pyridoxal 5'-phosphate-binding positions include Thr97, Ser98, 129–132, Thr172, Asp201, His204, and Tyr226; that span reads FPTD. N6-(pyridoxal phosphate)lysine is present on Lys227. Pyridoxal 5'-phosphate-binding residues include Trp256 and Thr282.

This sequence belongs to the kynureninase family. Homodimer. Requires pyridoxal 5'-phosphate as cofactor.

The catalysed reaction is L-kynurenine + H2O = anthranilate + L-alanine + H(+). It carries out the reaction 3-hydroxy-L-kynurenine + H2O = 3-hydroxyanthranilate + L-alanine + H(+). The protein operates within amino-acid degradation; L-kynurenine degradation; L-alanine and anthranilate from L-kynurenine: step 1/1. It functions in the pathway cofactor biosynthesis; NAD(+) biosynthesis; quinolinate from L-kynurenine: step 2/3. In terms of biological role, catalyzes the cleavage of L-kynurenine (L-Kyn) and L-3-hydroxykynurenine (L-3OHKyn) into anthranilic acid (AA) and 3-hydroxyanthranilic acid (3-OHAA), respectively. The polypeptide is Kynureninase (Pseudomonas fluorescens).